The primary structure comprises 233 residues: Membrane glycoprotein UL9 (233 aa).

Positions 1–20 (MSKRLQVFPWITILFYTSKS) are cleaved as a signal peptide. Residues Asn-40, Asn-94, Asn-101, Asn-131, and Asn-169 are each glycosylated (N-linked (GlcNAc...) asparagine; by host). A helical membrane pass occupies residues 194 to 214 (MWIIPLVIVITIIVLICFKFP).

This sequence belongs to the HHV-5 UL9 family.

It localises to the host membrane. The polypeptide is Membrane glycoprotein UL9 (UL9) (Homo sapiens (Human)).